The sequence spans 66 residues: MPKLKTKSGAKKRFKVTATGKVMSAQRGKRHGMIKRTKKQIRQLRGTRAIFKTDGDNIKKYFLPNA.

The interval 22 to 41 (VMSAQRGKRHGMIKRTKKQI) is disordered. Positions 27 to 41 (RGKRHGMIKRTKKQI) are enriched in basic residues.

It belongs to the bacterial ribosomal protein bL35 family.

This Rhodopseudomonas palustris (strain TIE-1) protein is Large ribosomal subunit protein bL35.